We begin with the raw amino-acid sequence, 114 residues long: Non-specific lipid-transfer protein 2 (114 aa).

The first 23 residues, 1–23, serve as a signal peptide directing secretion; it reads MEMFGKIACFVVFCMVVVAPHAE. Cystine bridges form between Cys27–Cys73, Cys37–Cys50, Cys51–Cys96, and Cys71–Cys110.

This sequence belongs to the plant LTP family.

Its function is as follows. Plant non-specific lipid-transfer proteins transfer phospholipids as well as galactolipids across membranes. May play a role in wax or cutin deposition in the cell walls of expanding epidermal cells and certain secretory tissues. This is Non-specific lipid-transfer protein 2 (LE16) from Solanum lycopersicum (Tomato).